A 1158-amino-acid chain; its full sequence is Type IV pilus biogenesis factor PilY1 (1158 aa).

The N-terminal stretch at 1 to 29 is a signal peptide; the sequence is MIHQITRAGKSLLAAGCTLSILFASDSYA. The Ca(2+) site is built by aspartate 841, asparagine 843, aspartate 845, isoleucine 847, and aspartate 849.

It belongs to the PilY1 family.

The protein resides in the fimbrium. It localises to the membrane. It is found in the cytoplasm. The protein localises to the cytosol. Functionally, involved in pilus assembly, twitching motility and adhesion to host cells. Primes type IV pili (T4P) assembly and is required for inclusion of minor pilins PilV, PilW and PilX to the surface pili. Stabilizes assembled pilus fibers likely by antagonizing retraction mediated by PilT. Calcium-binding and calcium release by PilY1 seem to be essential for twitching motility and for regulation of pilus retraction dynamics of PilT. Regulates surface-activated virulence possibly by acting as a surface-attachment mechanosensor. In Pseudomonas aeruginosa (strain UCBPP-PA14), this protein is Type IV pilus biogenesis factor PilY1.